A 366-amino-acid chain; its full sequence is DNA-directed RNA polymerase subunit alpha (366 aa).

The alpha N-terminal domain (alpha-NTD) stretch occupies residues 1 to 260 (MAISDNGGGS…DQLQSFIGSE (260 aa)). Residues 274–366 (EGALPYDHNL…ENLSKQYSED (93 aa)) form an alpha C-terminal domain (alpha-CTD) region.

It belongs to the RNA polymerase alpha chain family. In terms of assembly, homodimer. The RNAP catalytic core consists of 2 alpha, 1 beta, 1 beta' and 1 omega subunit. When a sigma factor is associated with the core the holoenzyme is formed, which can initiate transcription.

It catalyses the reaction RNA(n) + a ribonucleoside 5'-triphosphate = RNA(n+1) + diphosphate. In terms of biological role, DNA-dependent RNA polymerase catalyzes the transcription of DNA into RNA using the four ribonucleoside triphosphates as substrates. This Anaplasma marginale (strain St. Maries) protein is DNA-directed RNA polymerase subunit alpha.